The following is an 89-amino-acid chain: Large ribosomal subunit protein uL23cz/uL23cy (89 aa).

The protein belongs to the universal ribosomal protein uL23 family. Part of the 50S ribosomal subunit.

Its subcellular location is the plastid. The protein localises to the chloroplast. In terms of biological role, binds to 23S rRNA. The chain is Large ribosomal subunit protein uL23cz/uL23cy (rpl23-A) from Calycanthus floridus var. glaucus (Eastern sweetshrub).